An 89-amino-acid chain; its full sequence is Co-chaperonin GroES (89 aa).

This sequence belongs to the GroES chaperonin family. Heptamer of 7 subunits arranged in a ring. Interacts with the chaperonin GroEL.

It localises to the cytoplasm. Its function is as follows. Together with the chaperonin GroEL, plays an essential role in assisting protein folding. The GroEL-GroES system forms a nano-cage that allows encapsulation of the non-native substrate proteins and provides a physical environment optimized to promote and accelerate protein folding. GroES binds to the apical surface of the GroEL ring, thereby capping the opening of the GroEL channel. This chain is Co-chaperonin GroES, found in Fervidobacterium nodosum (strain ATCC 35602 / DSM 5306 / Rt17-B1).